Reading from the N-terminus, the 447-residue chain is MTAHEVNFDGLVGLTHHYAGLSFGNEASTRHRFQVSNPRLAVKQGLLKMKALADAGFLQAVIPPHERPFIPALRQLGFTGSDEQILDKVARQAPRWLSSVSSASPMWVANAATVCPSADALDGKVHLTVANLNNKFHRALEAPVTEALLRAIFRDENQFSVHSALPQVALLGDEGAANHNRLGGEYGSAGVQLFVYGREEENEIRPARYPARQSREASEAVARLNQVNPQQVIFAQQNPEVIDQGVFHNDVIAVSNRQVLFCHEAAFARQKVLINQLRTRVDGFMAIEVPAEEVSVSDAVATYLFNSQLLSRDDGSMLLVLPRECQDHAGVWRYLNKLVAEDNPISAIQVFDLRESMANGGGPACLRLRVVLTEEERRAVNPAVMMNDALFTALNAWADRYYRDRLTAADLADPLLLREGREALDVLTRLLDLGSVYPFQQTGAADG.

Substrate-binding positions include Ala-19–Ser-28, Asn-110, and His-137–Arg-138. Glu-174 is an active-site residue. Substrate is bound at residue Arg-212. His-248 is a catalytic residue. 2 residues coordinate substrate: Asp-250 and Asn-359. The active-site Nucleophile is Cys-365.

This sequence belongs to the succinylarginine dihydrolase family. In terms of assembly, homodimer.

It carries out the reaction N(2)-succinyl-L-arginine + 2 H2O + 2 H(+) = N(2)-succinyl-L-ornithine + 2 NH4(+) + CO2. It participates in amino-acid degradation; L-arginine degradation via AST pathway; L-glutamate and succinate from L-arginine: step 2/5. Functionally, catalyzes the hydrolysis of N(2)-succinylarginine into N(2)-succinylornithine, ammonia and CO(2). The polypeptide is N-succinylarginine dihydrolase (Salmonella enteritidis PT4 (strain P125109)).